Consider the following 213-residue polypeptide: 3-demethoxyubiquinol 3-hydroxylase (213 aa).

Residues E62, E92, H95, E144, E176, and H179 each contribute to the Fe cation site.

It belongs to the COQ7 family. The cofactor is Fe cation.

Its subcellular location is the cell membrane. The catalysed reaction is a 5-methoxy-2-methyl-3-(all-trans-polyprenyl)benzene-1,4-diol + AH2 + O2 = a 3-demethylubiquinol + A + H2O. Its pathway is cofactor biosynthesis; ubiquinone biosynthesis. Its function is as follows. Catalyzes the hydroxylation of 2-nonaprenyl-3-methyl-6-methoxy-1,4-benzoquinol during ubiquinone biosynthesis. In Chromohalobacter salexigens (strain ATCC BAA-138 / DSM 3043 / CIP 106854 / NCIMB 13768 / 1H11), this protein is 3-demethoxyubiquinol 3-hydroxylase.